The primary structure comprises 468 residues: KASVGFKAGVKDYKLTYYTPEYKTLDTDILAAFRVTPQPGVPPEEAGAAVAAESSTGTWTTVWTDGLTTLDRYKGRCYHIEPVPGEDNQYIAYVAYPLDLFEEGSVTNMFTSIVGNVFGFKALRALRLEDLRIPPAYIKTFQGPPHGIQVERDKLNKYGRPLLGCTIKPKLGLSAKNYGRAVYECLRGGLDFTKDDENVNSQPFMRWRDRFVFCAEALYKAQAETGEIKGHYLNAPAGTSEEMMKRAIFARELGVPIVMHDYLTGGFTANTSLAHYCRDNGLLLHIHRAMHAVIDRQKNHGMHFRVLAKALRMSGGDHIHAGXVVGKLEGEREITLGFVDLLRDDYIEKDRSRGIYFTQDXVSMPGVLPVASGGIHVWHMPALTEIFGDDSVLQFGGGTLGHPWGNAPGAVANRVALEACVQARNEGRDLAREGNEIIRAASKWSPELAAACEVWKEIKFEFPAMDTL.

N6,N6,N6-trimethyllysine is present on Lys7. Residues Asn116 and Thr166 each contribute to the substrate site. Residue Lys168 is the Proton acceptor of the active site. Lys170 serves as a coordination point for substrate. Mg(2+)-binding residues include Lys194, Asp196, and Glu197. Residue Lys194 is modified to N6-carboxylysine. His287 acts as the Proton acceptor in catalysis. Positions 288, 320, and 372 each coordinate substrate.

The protein belongs to the RuBisCO large chain family. Type I subfamily. Heterohexadecamer of 8 large chains and 8 small chains. It depends on Mg(2+) as a cofactor.

The protein resides in the plastid. It localises to the chloroplast. It catalyses the reaction 2 (2R)-3-phosphoglycerate + 2 H(+) = D-ribulose 1,5-bisphosphate + CO2 + H2O. The enzyme catalyses D-ribulose 1,5-bisphosphate + O2 = 2-phosphoglycolate + (2R)-3-phosphoglycerate + 2 H(+). Functionally, ruBisCO catalyzes two reactions: the carboxylation of D-ribulose 1,5-bisphosphate, the primary event in carbon dioxide fixation, as well as the oxidative fragmentation of the pentose substrate in the photorespiration process. Both reactions occur simultaneously and in competition at the same active site. The sequence is that of Ribulose bisphosphate carboxylase large chain from Couroupita guianensis (Cannonball tree).